The primary structure comprises 121 residues: uncharacterized protein (121 aa).

The next 3 helical transmembrane spans lie at 12–32, 35–55, and 67–87; these read MIGIAALAVGIVLGLVFHPGV, VIQPYLPIAVVAALDAVFGGL, and VFVVSFVFNVLVAALIVYVGD.

The protein belongs to the sbp family.

The protein localises to the cell membrane. This is an uncharacterized protein from Mycobacterium bovis (strain ATCC BAA-935 / AF2122/97).